The sequence spans 220 residues: Protein GrpE (220 aa).

Composition is skewed to polar residues over residues 1–12 (MEQGDKQATYNE) and 50–63 (AASTTADPAEQTSV). Positions 1–67 (MEQGDKQATY…AEQTSVEAEE (67 aa)) are disordered.

This sequence belongs to the GrpE family. Homodimer.

Its subcellular location is the cytoplasm. Its function is as follows. Participates actively in the response to hyperosmotic and heat shock by preventing the aggregation of stress-denatured proteins, in association with DnaK and GrpE. It is the nucleotide exchange factor for DnaK and may function as a thermosensor. Unfolded proteins bind initially to DnaJ; upon interaction with the DnaJ-bound protein, DnaK hydrolyzes its bound ATP, resulting in the formation of a stable complex. GrpE releases ADP from DnaK; ATP binding to DnaK triggers the release of the substrate protein, thus completing the reaction cycle. Several rounds of ATP-dependent interactions between DnaJ, DnaK and GrpE are required for fully efficient folding. In Geobacillus thermodenitrificans (strain NG80-2), this protein is Protein GrpE.